The sequence spans 433 residues: Nuclear hormone receptor family member nhr-98 (433 aa).

The segment at residues 41 to 116 (SKKCQICENP…FGMTIDNFQF (76 aa)) is a DNA-binding region (nuclear receptor). 2 consecutive NR C4-type zinc fingers follow at residues 44–64 (CQIC…CRAC) and 80–104 (CKTE…MQRC). The region spanning 177-433 (ETPYQVSNVL…CSHPGIFLNA (257 aa)) is the NR LBD domain.

The protein belongs to the nuclear hormone receptor family.

It localises to the nucleus. Its function is as follows. Orphan nuclear receptor. This is Nuclear hormone receptor family member nhr-98 (nhr-98) from Caenorhabditis elegans.